The following is an 88-amino-acid chain: Phosphocarrier protein HPr (88 aa).

The 88-residue stretch at 1 to 88 (MEQKSYVIID…DILSKEGLTK (88 aa)) folds into the HPr domain. The active-site Pros-phosphohistidine intermediate is H15. S46 bears the Phosphoserine; by HPrK/P mark.

This sequence belongs to the HPr family.

The protein resides in the cytoplasm. Phosphorylation on Ser-46 inhibits the phosphoryl transfer from enzyme I to HPr. Functionally, general (non sugar-specific) component of the phosphoenolpyruvate-dependent sugar phosphotransferase system (sugar PTS). This major carbohydrate active-transport system catalyzes the phosphorylation of incoming sugar substrates concomitantly with their translocation across the cell membrane. The phosphoryl group from phosphoenolpyruvate (PEP) is transferred to the phosphoryl carrier protein HPr by enzyme I. Phospho-HPr then transfers it to the PTS EIIA domain. This Staphylococcus xylosus protein is Phosphocarrier protein HPr (ptsH).